We begin with the raw amino-acid sequence, 524 residues long: Peptide chain release factor 3 (524 aa).

Residues 9–275 (SRRRTFAIIS…AVVDLSPPPI (267 aa)) form the tr-type G domain. Residues 18–25 (SHPDAGKT), 86–90 (DTPGH), and 140–143 (NKLD) each bind GTP.

This sequence belongs to the TRAFAC class translation factor GTPase superfamily. Classic translation factor GTPase family. PrfC subfamily.

The protein resides in the cytoplasm. Increases the formation of ribosomal termination complexes and stimulates activities of RF-1 and RF-2. It binds guanine nucleotides and has strong preference for UGA stop codons. It may interact directly with the ribosome. The stimulation of RF-1 and RF-2 is significantly reduced by GTP and GDP, but not by GMP. The protein is Peptide chain release factor 3 of Dechloromonas aromatica (strain RCB).